The chain runs to 373 residues: Enoyl-[acyl-carrier-protein] reductase, mitochondrial (373 aa).

A mitochondrion-targeting transit peptide spans 1–53 (MWVCSTLWRVRTPARQWRGLLPASGCHGPAASSYSASAEPARVRALVYGHHGD). Lys-61 carries the post-translational modification N6-acetyllysine; alternate. Lys-61 is subject to N6-succinyllysine; alternate. The Proton donor role is filled by Tyr-94. Residues Asn-167, 193-196 (NSGV), and 216-218 (RDR) contribute to the NADP(+) site. 2 positions are modified to N6-acetyllysine; alternate: Lys-252 and Lys-267. Residues Lys-252 and Lys-267 each carry the N6-succinyllysine; alternate modification. NADP(+) contacts are provided by residues 285–288 (YGGM) and 310–312 (FWL). An N6-succinyllysine modification is found at Lys-316. Lys-368 is a binding site for NADP(+).

This sequence belongs to the zinc-containing alcohol dehydrogenase family. Quinone oxidoreductase subfamily. As to quaternary structure, homodimer. Isoform 2 interacts with PPARA in the nucleus and increases its activity. Highly expressed in skeletal and heart muscle. Expressed at lower level in placenta, liver, kidney and pancreas. Weakly or not expressed in lung.

The protein localises to the mitochondrion. Its subcellular location is the cytoplasm. The protein resides in the nucleus. It catalyses the reaction a 2,3-saturated acyl-[ACP] + NADP(+) = a (2E)-enoyl-[ACP] + NADPH + H(+). The catalysed reaction is (2E)-butenoyl-[ACP] + NADPH + H(+) = butanoyl-[ACP] + NADP(+). The enzyme catalyses (2E)-hexenoyl-[ACP] + NADPH + H(+) = hexanoyl-[ACP] + NADP(+). It carries out the reaction (2E)-octenoyl-[ACP] + NADPH + H(+) = octanoyl-[ACP] + NADP(+). It catalyses the reaction (2E)-decenoyl-[ACP] + NADPH + H(+) = decanoyl-[ACP] + NADP(+). The catalysed reaction is (2E)-dodecenoyl-[ACP] + NADPH + H(+) = dodecanoyl-[ACP] + NADP(+). The enzyme catalyses (2E)-tetradecenoyl-[ACP] + NADPH + H(+) = tetradecanoyl-[ACP] + NADP(+). It carries out the reaction (2E)-hexadecenoyl-[ACP] + NADPH + H(+) = hexadecanoyl-[ACP] + NADP(+). Its function is as follows. Catalyzes the NADPH-dependent reduction of trans-2-enoyl thioesters in mitochondrial fatty acid synthesis (fatty acid synthesis type II). Fatty acid chain elongation in mitochondria uses acyl carrier protein (ACP) as an acyl group carrier, but the enzyme accepts both ACP and CoA thioesters as substrates in vitro. Displays a preference for medium-chain over short- and long-chain substrates. May provide the octanoyl chain used for lipoic acid biosynthesis, regulating protein lipoylation and mitochondrial respiratory activity particularly in Purkinje cells. Involved in iron homeostasis; affecting Fe-S cluster assembly and ceramide metabolism. Required for proper morphology and bioenergetic functions of mitochondria. Required for maintenance of neurons. The sequence is that of Enoyl-[acyl-carrier-protein] reductase, mitochondrial (MECR) from Homo sapiens (Human).